We begin with the raw amino-acid sequence, 250 residues long: Ribonuclease HII (250 aa).

The 185-residue stretch at 66–250 (QLVAGVDEVG…SFAPVSEYEK (185 aa)) folds into the RNase H type-2 domain. Positions 72, 73, and 164 each coordinate a divalent metal cation.

It belongs to the RNase HII family. Mn(2+) is required as a cofactor. It depends on Mg(2+) as a cofactor.

The protein localises to the cytoplasm. The enzyme catalyses Endonucleolytic cleavage to 5'-phosphomonoester.. Functionally, endonuclease that specifically degrades the RNA of RNA-DNA hybrids. The sequence is that of Ribonuclease HII from Lactobacillus gasseri (strain ATCC 33323 / DSM 20243 / BCRC 14619 / CIP 102991 / JCM 1131 / KCTC 3163 / NCIMB 11718 / NCTC 13722 / AM63).